Here is a 548-residue protein sequence, read N- to C-terminus: Thermosome subunit alpha (548 aa).

The segment at 527–548 (TKPEGGQGGGMPGGMGGMDMGM) is disordered. The segment covering 531-548 (GGQGGGMPGGMGGMDMGM) has biased composition (gly residues).

This sequence belongs to the TCP-1 chaperonin family. As to quaternary structure, forms a Heterooligomeric complex of two stacked eight-membered rings.

Functionally, molecular chaperone; binds unfolded polypeptides in vitro, and has a weak ATPase activity. This is Thermosome subunit alpha (thsA) from Thermococcus sp. (strain JCM 11816 / KS-1).